The primary structure comprises 447 residues: Glutamate--tRNA ligase 1 (447 aa).

The 'HIGH' region signature appears at 10–20 (PSPTGMLHVGN). The short motif at 240–244 (KISKR) is the 'KMSKS' region element. Residue lysine 243 coordinates ATP.

It belongs to the class-I aminoacyl-tRNA synthetase family. Glutamate--tRNA ligase type 1 subfamily. As to quaternary structure, monomer.

It localises to the cytoplasm. The catalysed reaction is tRNA(Glu) + L-glutamate + ATP = L-glutamyl-tRNA(Glu) + AMP + diphosphate. Functionally, catalyzes the attachment of glutamate to tRNA(Glu) in a two-step reaction: glutamate is first activated by ATP to form Glu-AMP and then transferred to the acceptor end of tRNA(Glu). In Rickettsia conorii (strain ATCC VR-613 / Malish 7), this protein is Glutamate--tRNA ligase 1.